The chain runs to 141 residues: Small ribosomal subunit protein bS6 (141 aa).

Residues 96–141 (VTGPSAMMKTVEREEFRKASQAGNQTTAPAASPADHAAAPASADRS) form a disordered region. The span at 123–141 (APAASPADHAAAPASADRS) shows a compositional bias: low complexity.

The protein belongs to the bacterial ribosomal protein bS6 family.

In terms of biological role, binds together with bS18 to 16S ribosomal RNA. This is Small ribosomal subunit protein bS6 from Verminephrobacter eiseniae (strain EF01-2).